The following is a 273-amino-acid chain: DNA repair protein RecO (273 aa).

The interval 249–273 (GRSLTEEPELKAEQTEAEKESQRPR) is disordered. The span at 252-273 (LTEEPELKAEQTEAEKESQRPR) shows a compositional bias: basic and acidic residues.

This sequence belongs to the RecO family.

In terms of biological role, involved in DNA repair and RecF pathway recombination. In Heliobacterium modesticaldum (strain ATCC 51547 / Ice1), this protein is DNA repair protein RecO.